Here is a 752-residue protein sequence, read N- to C-terminus: Translation initiation factor IF-2 (752 aa).

The interval 26–167 (RQGMGVKSHM…QPTQRKDKPL (142 aa)) is disordered. Residues 34–47 (HMSSVTPDQAQQLR) show a composition bias toward polar residues. The segment covering 72–81 (KQNNHQAQNH) has biased composition (low complexity). Residues 83-96 (QHHDHDKTQNERPQ) are compositionally biased toward basic and acidic residues. Residues 101 to 129 (SRSNNGTKDNNQHQNNGGRFGGSLNNDQG) show a composition bias toward polar residues. Residues 131-150 (NGKRFNKKNKKNKKHNKNKR) show a composition bias toward basic residues. Residues 151–167 (LREVAHKQPTQRKDKPL) show a composition bias toward basic and acidic residues. A tr-type G domain is found at 253-422 (TRPAVVTVMG…LLQAEMLELK (170 aa)). Positions 262-269 (GHVDHGKT) are G1. Residue 262-269 (GHVDHGKT) coordinates GTP. The segment at 287–291 (GITQE) is G2. The G3 stretch occupies residues 308–311 (DTPG). GTP is bound by residues 308–312 (DTPGH) and 362–365 (NKID). The segment at 362–365 (NKID) is G4. The segment at 398 to 400 (SAK) is G5.

Belongs to the TRAFAC class translation factor GTPase superfamily. Classic translation factor GTPase family. IF-2 subfamily.

The protein resides in the cytoplasm. Functionally, one of the essential components for the initiation of protein synthesis. Protects formylmethionyl-tRNA from spontaneous hydrolysis and promotes its binding to the 30S ribosomal subunits. Also involved in the hydrolysis of GTP during the formation of the 70S ribosomal complex. The polypeptide is Translation initiation factor IF-2 (Limosilactobacillus reuteri (strain DSM 20016) (Lactobacillus reuteri)).